Here is a 249-residue protein sequence, read N- to C-terminus: DNA repair protein RecO (249 aa).

This sequence belongs to the RecO family.

In terms of biological role, involved in DNA repair and RecF pathway recombination. In Afipia carboxidovorans (strain ATCC 49405 / DSM 1227 / KCTC 32145 / OM5) (Oligotropha carboxidovorans), this protein is DNA repair protein RecO.